A 247-amino-acid chain; its full sequence is Uridylate kinase (247 aa).

ATP is bound at residue 18–21 (KLSG). Position 60 (Gly60) interacts with UMP. Positions 61 and 65 each coordinate ATP. UMP contacts are provided by residues Asp80 and 141–148 (TGNPFFTT). 3 residues coordinate ATP: Thr168, Tyr174, and Asp177.

The protein belongs to the UMP kinase family. In terms of assembly, homohexamer.

It is found in the cytoplasm. The enzyme catalyses UMP + ATP = UDP + ADP. It functions in the pathway pyrimidine metabolism; CTP biosynthesis via de novo pathway; UDP from UMP (UMPK route): step 1/1. Inhibited by UTP. Functionally, catalyzes the reversible phosphorylation of UMP to UDP. This is Uridylate kinase from Ectopseudomonas mendocina (strain ymp) (Pseudomonas mendocina).